We begin with the raw amino-acid sequence, 455 residues long: 2-oxoisovalerate dehydrogenase subunit alpha, mitochondrial (455 aa).

The N-terminal 55 residues, 1-55 (MQGSAKMAMAVAVAVARVWRPSRGLGRTGLPLLRLLGARGLARFHPHRWQQQQHF), are a transit peptide targeting the mitochondrion. Residues tyrosine 168 and arginine 169 each coordinate thiamine diphosphate. Serine 216 lines the K(+) pocket. Residue serine 217 participates in thiamine diphosphate binding. The K(+) site is built by proline 218, threonine 221, and glutamine 222. Glutamate 248 serves as a coordination point for Mg(2+). Residues glycine 249, alanine 250, and arginine 275 each contribute to the thiamine diphosphate site. Mg(2+) is bound by residues asparagine 277 and tyrosine 279. Thiamine diphosphate is bound at residue histidine 346. Serine 347 carries the post-translational modification Phosphoserine; by BCKDK. At threonine 348 the chain carries Phosphothreonine. 2 positions are modified to phosphoserine: serine 349 and serine 357. Lysine 366 is modified (N6-acetyllysine; alternate). Lysine 366 carries the post-translational modification N6-succinyllysine; alternate. Lysine 390 bears the N6-succinyllysine mark.

Belongs to the BCKDHA family. In terms of assembly, heterotetramer of 2 alpha/BCKDHA and 2 beta chains/BCKDHB that forms the branched-chain alpha-keto acid decarboxylase (E1) component of the BCKD complex. The branched-chain alpha-ketoacid dehydrogenase is a large complex composed of three major building blocks E1, E2 and E3. It is organized around E2, a 24-meric cubic core composed of DBT, to which are associated 6 to 12 copies of E1, and approximately 6 copies of the dehydrogenase E3, a DLD dimer. Interacts with PPM1K. Requires thiamine diphosphate as cofactor. The cofactor is Mg(2+). In terms of processing, phosphorylated at Ser-347 by BCKDK and dephosphorylated by protein phosphatase PPM1K. As to expression, expressed in kidney (at protein level).

Its subcellular location is the mitochondrion matrix. The catalysed reaction is N(6)-[(R)-lipoyl]-L-lysyl-[protein] + 3-methyl-2-oxobutanoate + H(+) = N(6)-[(R)-S(8)-2-methylpropanoyldihydrolipoyl]-L-lysyl-[protein] + CO2. Functionally, together with BCKDHB forms the heterotetrameric E1 subunit of the mitochondrial branched-chain alpha-ketoacid dehydrogenase (BCKD) complex. The BCKD complex catalyzes the multi-step oxidative decarboxylation of alpha-ketoacids derived from the branched-chain amino-acids valine, leucine and isoleucine producing CO2 and acyl-CoA which is subsequently utilized to produce energy. The E1 subunit catalyzes the first step with the decarboxylation of the alpha-ketoacid forming an enzyme-product intermediate. A reductive acylation mediated by the lipoylamide cofactor of E2 extracts the acyl group from the E1 active site for the next step of the reaction. This is 2-oxoisovalerate dehydrogenase subunit alpha, mitochondrial (BCKDHA) from Bos taurus (Bovine).